The chain runs to 230 residues: MAKEQPNDLTEQLTDTPKTAVEQAETMQSVPQTIVKKTGTALSLLAILVALGIGGAGYYFGQQQMAKIQQKLTALENQTGANLSSNNTNNNKRLTQLEQSLKTAQENIAQLEQLIVSKTGEITSLQTQMKQVSQLAIAQQPSDWLFSEADFLLNNALRKLVLDNDVDTAVSLLKLADETLVKVNNSQANEIRSAINQDLKQLLSLSSVDQNAIMQKLSQLANTVDELQRL.

This sequence to E.coli HemX N-terminal region.

This is an uncharacterized protein from Haemophilus influenzae (strain ATCC 51907 / DSM 11121 / KW20 / Rd).